The sequence spans 246 residues: Bis(5'-nucleosyl)-tetraphosphatase PrpE [asymmetrical] (246 aa).

Belongs to the PrpE family. Ni(2+) is required as a cofactor.

It catalyses the reaction P(1),P(4)-bis(5'-guanosyl) tetraphosphate + H2O = GMP + GTP + 2 H(+). Its function is as follows. Asymmetrically hydrolyzes Ap4p to yield AMP and ATP. This is Bis(5'-nucleosyl)-tetraphosphatase PrpE [asymmetrical] from Bacillus cereus (strain AH187).